The chain runs to 570 residues: Glutamate--tRNA ligase (570 aa).

Residues 105-115 (PNPDGAFHLGN) carry the 'HIGH' region motif.

It belongs to the class-I aminoacyl-tRNA synthetase family. Glutamate--tRNA ligase type 2 subfamily.

The protein resides in the cytoplasm. The enzyme catalyses tRNA(Glu) + L-glutamate + ATP = L-glutamyl-tRNA(Glu) + AMP + diphosphate. Catalyzes the attachment of glutamate to tRNA(Glu) in a two-step reaction: glutamate is first activated by ATP to form Glu-AMP and then transferred to the acceptor end of tRNA(Glu). This chain is Glutamate--tRNA ligase, found in Pyrococcus horikoshii (strain ATCC 700860 / DSM 12428 / JCM 9974 / NBRC 100139 / OT-3).